Reading from the N-terminus, the 1687-residue chain is Genome polyprotein (1687 aa).

The segment covering 1–13 (MRMATPSSAPSVR) has biased composition (polar residues). The disordered stretch occupies residues 1–56 (MRMATPSSAPSVRNTEKRKNKKASSKASVSFGAPSPLSSESEDEINYMTPPEQEAQ). An interaction with host MAP1LC3A/LC3 region spans residues 1–116 (MRMATPSSAP…FRRYPHLRPK (116 aa)). Residues 117 to 341 (EDRPDAPSHA…ISIFGEWQAE (225 aa)) form an interaction with NTPase region. The interval 244–341 (SPVQDWNVDP…ISIFGEWQAE (98 aa)) is interaction with NS4. Host ER membrane association regions lie at residues 261 to 292 (KLRM…KPLN) and 302 to 341 (WTFS…WQAE). An interaction with NS1-2, NS4 and homooligomerization region spans residues 342 to 518 (GPFDLALDVV…GKTCFCQNLA (177 aa)). The region spanning 476 to 641 (RISMARAAFE…DDARARAPGD (166 aa)) is the SF3 helicase domain. An ATP-binding site is contributed by 504–511 (GRPGIGKT). The segment at 595-700 (VIIITTNQQT…AVALVHERHD (106 aa)) is important for mitochondrion targeting. The tract at residues 893-898 (DEEYDE) is acidic. Residue tyrosine 896 is modified to O-(5'-phospho-RNA)-tyrosine. The segment at 978–994 (WADDDRQVDYGEKINFE) is interaction with host EIF4G. The Peptidase C37 domain occupies 995-1172 (APVSIWSRVV…AATHGEPTLE (178 aa)). Active-site for 3CLpro activity residues include histidine 1024, aspartate 1048, and cysteine 1133. The RdRp catalytic domain maps to 1416–1537 (RYHMDADYTR…STNLELDMVK (122 aa)). Aspartate 1420 and aspartate 1422 together coordinate Mg(2+). Residues cysteine 1482 and cysteine 1484 are joined by a disulfide bond. Aspartate 1524, glutamate 1525, and serine 1569 together coordinate Mg(2+).

As to quaternary structure, homodimer. Interacts with NTPase; this interaction increases the proapoptotic activity of the NTPase and is crucial for the formation of the viral replication complex. Interacts with NS4; this interaction is crucial for the formation of the viral replication complex. Interacts (via N-terminus) with host VAPA. Interacts with host VAPB. In terms of assembly, monomer. Homooligomer. Interacts with NS1-2; this interaction increases the proapoptotic activity of the NTPase and is crucial for the formation of the viral replication complex. Interacts with NS4; this interaction increases the proapoptotic activity of the NTPase. Interacts with host G3BP1; this interaction leads to the redistribution of G3BP1 and its cellular partners to the viral replication complexes, thereby preventing the assembly of stress granules. As to quaternary structure, homodimer. Monomer; in solution. In terms of assembly, interacts with NTPase; this interaction increases the proapoptotic activity of the NTPase. Interacts with NS1-2; this interaction is crucial for the formation of the viral replication complex. Monomer. Interacts with the RNA-directed RNA polymerase; this interaction induces the multimerization of the RdRp and enhances its activity. Interacts with host IEF4E; this interaction plays a role in translation of viral proteins. Interacts (via C-terminus) with host IEF4G1 (via central domain); this interaction plays a role in translation of viral proteins. As to quaternary structure, homohexamer; also forms fibrous hexameric oligomer. Interacts with the viral genome-linked protein; this interaction induces the multimerization of the RdRp and enhances its activity. Mg(2+) serves as cofactor. Requires Mn(2+) as cofactor. Specific enzymatic cleavages in vivo yield mature proteins. 3CLpro is first autocatalytically cleaved, then processes the whole polyprotein. Post-translationally, cleaved by host CASP3/caspase 3 at 18-22 h.p.i. The cleavage allows NS1 secretion, which is essential for intestinal infection and resistance to IFN-lambda. In terms of processing, VPg is uridylylated by the polymerase and is covalently attached to the 5'-end of the polyadenylated genomic and subgenomic RNAs. This uridylylated form acts as a nucleotide-peptide primer for the polymerase.

Its subcellular location is the host endoplasmic reticulum membrane. The protein resides in the secreted. The protein localises to the host endosome membrane. It localises to the host mitochondrion. It is found in the host cytoplasm. Its subcellular location is the host perinuclear region. The enzyme catalyses a ribonucleoside 5'-triphosphate + H2O = a ribonucleoside 5'-diphosphate + phosphate + H(+). It carries out the reaction Endopeptidase with a preference for cleavage when the P1 position is occupied by Glu-|-Xaa and the P1' position is occupied by Gly-|-Yaa.. It catalyses the reaction RNA(n) + a ribonucleoside 5'-triphosphate = RNA(n+1) + diphosphate. Inhibited by Suramin, Suramin-related compounds and NF023. Inhibited by PPNDS. Its function is as follows. Induces the proliferation of the host smooth ER membranes forming long tubular structures. These remodeled membranes probably form the viral factories that contain the replication complex. May play a role in viral replication by interacting with host VAPA, a vesicle-associated membrane protein that plays a role in SNARE-mediated vesicle fusion. This interaction may target replication complex to intracellular membranes. Promotes intestinal tropism and persistent fecal shedding in strain CR6. This function requires Glu-94 and is present in persistant strains. Functionally, displays NTPase activity, but probably no helicase activity. Displays RNA chaperone-like activity and destabilizes dsRNA. Induces the formation of convoluted membranes derived from the host ER. These remodeled membranes probably form the viral factories that contain the replication complex. Initiates host cell death by targeting the mitochondrial outer membrane, leading to the permeabilization of mitochondria, programmed host cell death and viral egress. Externalization of host cardiolipin seems to be involved in the process. Probably plays a role in preventing the assembly of host stress granules. In terms of biological role, probable key protein responsible for the formation of membrane alterations by the virus. Induces the formation of convoluted membranes derived from the host ER. These remodeled membranes probably form the viral factories that contain the replication complex. May play a role in targeting replication complex to intracellular membranes. Its function is as follows. Viral genome-linked protein is covalently linked to the 5'-end of the positive-strand, negative-strand genomic RNAs and subgenomic RNA. Acts as a genome-linked replication primer. May recruit ribosome to viral RNA thereby promoting viral proteins translation. Interacts with host translation initiation complex to allow the translation of viral proteins. Induces the formation of aggregates of RNA-directed RNA polymerase in the presence of RNA. Through its interaction with the viral RNA-directed RNA polymerase, plays a crucial role in enhancing the polymerase activity. Processes the polyprotein. 3CLpro-RdRp is first released by autocleavage, then all other proteins are cleaved. May cleave host polyadenylate-binding protein thereby inhibiting cellular translation. Does not cleave host G3BP1. Functionally, replicates genomic and antigenomic RNA by recognizing replications specific signals. Also transcribes a subgenomic mRNA by initiating RNA synthesis internally on antigenomic RNA. This sgRNA codes for structural proteins. Catalyzes the covalent attachment VPg with viral RNAs. The chain is Genome polyprotein from Norovirus (isolate Mouse/NoV/United States/MNV1/2002/GV) (MNV-1).